The chain runs to 420 residues: NEDD8-specific protease 1 (420 aa).

Low complexity predominate over residues 257–281; it reads KSSDSSETSHESSNSNLKKSSESGS. The interval 257-420 is disordered; that stretch reads KSSDSSETSH…EELVSGDFPF (164 aa). Over residues 286 to 296 the composition is skewed to basic and acidic residues; the sequence is NNHESDKDLHH. The span at 297–310 shows a compositional bias: basic residues; sequence EGHHHHHHHHHHHH. Residues 311-324 show a composition bias toward basic and acidic residues; sequence SHDDDPSSPAEKKQ. Residues S329, S340, and S351 each carry the phosphoserine modification. Positions 355-377 are enriched in basic and acidic residues; sequence NKEDHLPLLSDEKLDKSAIDKIE.

Belongs to the peptidase C48 family. Interacts with csn1. It is, however, not a component of the signalosome.

It is found in the cytoplasm. Functionally, protease that catalyzes two essential functions in the NEDD8 pathway: processing of full-length NEDD8 to its mature form and deconjugation of NEDD8 from targeted proteins such as the pcu1, pcu2 and pcu4 cullins and other proteins. The chain is NEDD8-specific protease 1 (nep1) from Schizosaccharomyces pombe (strain 972 / ATCC 24843) (Fission yeast).